Here is a 347-residue protein sequence, read N- to C-terminus: Protein RecA (347 aa).

Gly65 to Thr72 contributes to the ATP binding site.

This sequence belongs to the RecA family.

It is found in the cytoplasm. Its function is as follows. Can catalyze the hydrolysis of ATP in the presence of single-stranded DNA, the ATP-dependent uptake of single-stranded DNA by duplex DNA, and the ATP-dependent hybridization of homologous single-stranded DNAs. It interacts with LexA causing its activation and leading to its autocatalytic cleavage. This chain is Protein RecA, found in Marinobacter nauticus (strain ATCC 700491 / DSM 11845 / VT8) (Marinobacter aquaeolei).